The primary structure comprises 340 residues: Tetraacyldisaccharide 4'-kinase (340 aa).

51–58 (HMGGAGKT) lines the ATP pocket.

It belongs to the LpxK family.

It carries out the reaction a lipid A disaccharide + ATP = a lipid IVA + ADP + H(+). The protein operates within glycolipid biosynthesis; lipid IV(A) biosynthesis; lipid IV(A) from (3R)-3-hydroxytetradecanoyl-[acyl-carrier-protein] and UDP-N-acetyl-alpha-D-glucosamine: step 6/6. Functionally, transfers the gamma-phosphate of ATP to the 4'-position of a tetraacyldisaccharide 1-phosphate intermediate (termed DS-1-P) to form tetraacyldisaccharide 1,4'-bis-phosphate (lipid IVA). The chain is Tetraacyldisaccharide 4'-kinase from Rhodopseudomonas palustris (strain TIE-1).